The chain runs to 233 residues: Ion-translocating oxidoreductase complex subunit E (233 aa).

Helical transmembrane passes span 18 to 38 (ALVQ…ATNA), 39 to 59 (LGLG…VSAL), 69 to 89 (IPIY…LINA), 92 to 112 (FGLY…CIVI), 128 to 148 (ALDG…LGAL), and 182 to 202 (PFLL…LLAG).

The protein belongs to the NqrDE/RnfAE family. As to quaternary structure, the complex is composed of six subunits: RnfA, RnfB, RnfC, RnfD, RnfE and RnfG.

Its subcellular location is the cell inner membrane. In terms of biological role, part of a membrane-bound complex that couples electron transfer with translocation of ions across the membrane. The chain is Ion-translocating oxidoreductase complex subunit E from Yersinia pseudotuberculosis serotype IB (strain PB1/+).